The sequence spans 269 residues: 2' cyclic ADP-D-ribose synthase AbTIR (269 aa).

The stretch at 31–99 (LKTKLSEISR…KQQKDEIEHQ (69 aa)) forms a coiled coil. In terms of domain architecture, TIR spans 133 to 266 (PEYDLFISHA…EIAHQLADVI (134 aa)). Ser143, Lys172, and Lys202 together coordinate NAD(+). Glu208 is an active-site residue. Lys245 contributes to the NAD(+) binding site.

As to quaternary structure, homodimer. In the presence of NAD(+) analog 8-amino-isoquinoline adenine dinucleotide (3AD) forms filaments with 3AD between monomers; conformational changes occur upon 3AD binding.

It carries out the reaction NAD(+) = 2'cADPR + nicotinamide + H(+). The catalysed reaction is NAD(+) + H2O = ADP-D-ribose + nicotinamide + H(+). The enzyme catalyses NADP(+) + H2O = ADP-D-ribose 2'-phosphate + nicotinamide + H(+). In terms of biological role, NAD(+) hydrolase (NADase) that catalyzes cleavage of NAD(+) into ADP-D-ribose (ADPR) and nicotinamide. In addition to ADPR, also generates a cyclization variant of cyclic ADPR (cADPR), termed 2'cADPR (v-cADPR). Cleaves NADP(+), but does not cyclize the product. The polypeptide is 2' cyclic ADP-D-ribose synthase AbTIR (Acinetobacter baumannii (strain 1295743)).